A 210-amino-acid polypeptide reads, in one-letter code: Uracil phosphoribosyltransferase (210 aa).

Residues arginine 77, arginine 102, and 129–137 (DPMLATGAS) each bind 5-phospho-alpha-D-ribose 1-diphosphate. Residues isoleucine 195 and 200-202 (GDA) contribute to the uracil site. Aspartate 201 serves as a coordination point for 5-phospho-alpha-D-ribose 1-diphosphate.

It belongs to the UPRTase family. Mg(2+) serves as cofactor.

It catalyses the reaction UMP + diphosphate = 5-phospho-alpha-D-ribose 1-diphosphate + uracil. It functions in the pathway pyrimidine metabolism; UMP biosynthesis via salvage pathway; UMP from uracil: step 1/1. Its activity is regulated as follows. Allosterically activated by GTP. Functionally, catalyzes the conversion of uracil and 5-phospho-alpha-D-ribose 1-diphosphate (PRPP) to UMP and diphosphate. This chain is Uracil phosphoribosyltransferase, found in Mycoplasmoides gallisepticum (strain R(low / passage 15 / clone 2)) (Mycoplasma gallisepticum).